Reading from the N-terminus, the 480-residue chain is Acyl-lipid (8-3)-desaturase (480 aa).

Positions 1–30 (MAPHSADTAGLVPSDELRLRTSNSKGPEQE) are disordered. Residues 33-107 (LKKYTLEDVS…LAKYCIGELV (75 aa)) form the Cytochrome b5 heme-binding domain. Residues His-68 and His-90 each coordinate heme. 2 helical membrane passes run 151 to 171 (IHPHMILKSLFILGGYFASYY) and 173 to 193 (AFFWSSSVLVSLFFALWMGFF). Positions 203 to 207 (HDGNH) match the Histidine box-1 motif. The short motif at 238–243 (HVVGHH) is the Histidine box-2 element. 3 helical membrane-spanning segments follow: residues 280–300 (IYLAVLYGTLALKSIFLDDFL), 322–342 (IFFQGKLLYAFYMFVLPSVYG), and 348–368 (TFLALYVASQLITGWMLAFLF). The Histidine box-3 signature appears at 419-423 (QIEHH).

It belongs to the fatty acid desaturase type 1 family. The cofactor is Fe(2+).

It localises to the membrane. It catalyses the reaction an (8Z,11Z,14Z)-icosatrienoyl-containing glycerolipid + 2 Fe(II)-[cytochrome b5] + O2 + 2 H(+) = (5Z,8Z,11Z,14Z)-eicosatetraenoyl-containing glycerolipid + 2 Fe(III)-[cytochrome b5] + 2 H2O. The enzyme catalyses an (8Z,11Z,14Z,17Z)-eicosatetraenoyl-containing glycerolipid + 2 Fe(II)-[cytochrome b5] + O2 + 2 H(+) = a (5Z,8Z,11Z,14Z,17Z)-eicosapentaenoyl-containing glycerolipid + 2 Fe(III)-[cytochrome b5] + 2 H2O. In terms of biological role, fatty acid desaturase that introduces a cis double bond at the 5-position in 20-carbon polyunsaturated fatty acids incorporated in a glycerolipid that contain a Delta(8) double bond. The chain is Acyl-lipid (8-3)-desaturase from Physcomitrium patens (Spreading-leaved earth moss).